Consider the following 175-residue polypeptide: Regenerating islet-derived protein 3-beta (175 aa).

An N-terminal signal peptide occupies residues 1-26; sequence MLHRLAFPVMSWMLLSCLMLLSQVQG. The propeptide occupies 27 to 37; the sequence is EDSPKKIPSAR. 3 disulfides stabilise this stretch: cysteine 40–cysteine 51, cysteine 68–cysteine 171, and cysteine 146–cysteine 163. Positions 47-172 constitute a C-type lectin domain; the sequence is YGSYCYALFQ…CEVKLPYVCK (126 aa). Histidine 107 is a binding site for Zn(2+). Positions 114 to 116 match the EPN motif; sequence EPN. Glutamate 121 is a binding site for Zn(2+).

Forms a hexameric membrane-permeabilizing oligomeric pore on membrane phospholipids. The hexamer is formed by three dimers related by helical symmetry. Forms filaments, filamentation traps pore complexes and limits damage to host cells. Interacts with EXTL3. Proteolytic processing by trypsin removes an inhibitory N-terminal propeptide and is essential for peptidoglycan binding and antibacterial activity. Constitutively expressed in intestine.

The protein resides in the secreted. Its activity is regulated as follows. Lipopolysaccharide inhibits pore-forming activity, explaining why is bactericidal for Gram-positive but not Gram-negative bacteria. Bactericidal C-type lectin which acts against several intestinal Gram-positive bacteria and Gram-negative bacteria. Lacks antibacterial activity against S.typhimurium. May play a role in protection against infection with S.enteritidis by inhibiting its translocation from the gut lumen into intestinal tissues and further extraintestinal tissues. Functionally, acts as a hormone in response to different stimuli. Secreted by different cell types to activate its receptor EXTL3 and induce cell specific signaling pathways. In pancreas, is able stimulate cell proliferation. The polypeptide is Regenerating islet-derived protein 3-beta (Rattus norvegicus (Rat)).